The sequence spans 331 residues: Aspartate carbamoyltransferase catalytic subunit (331 aa).

The carbamoyl phosphate site is built by Arg76 and Thr77. Position 104 (Lys104) interacts with L-aspartate. Carbamoyl phosphate-binding residues include Arg126, His154, and Gln157. The L-aspartate site is built by Arg187 and Arg246. Residues Gly287 and Pro288 each coordinate carbamoyl phosphate.

Belongs to the aspartate/ornithine carbamoyltransferase superfamily. ATCase family. As to quaternary structure, heterododecamer (2C3:3R2) of six catalytic PyrB chains organized as two trimers (C3), and six regulatory PyrI chains organized as three dimers (R2).

It carries out the reaction carbamoyl phosphate + L-aspartate = N-carbamoyl-L-aspartate + phosphate + H(+). It functions in the pathway pyrimidine metabolism; UMP biosynthesis via de novo pathway; (S)-dihydroorotate from bicarbonate: step 2/3. In terms of biological role, catalyzes the condensation of carbamoyl phosphate and aspartate to form carbamoyl aspartate and inorganic phosphate, the committed step in the de novo pyrimidine nucleotide biosynthesis pathway. In Dehalococcoides mccartyi (strain ATCC BAA-2100 / JCM 16839 / KCTC 5957 / BAV1), this protein is Aspartate carbamoyltransferase catalytic subunit.